Here is a 727-residue protein sequence, read N- to C-terminus: Malate synthase G (727 aa).

Residues V117, 124-125 (RY), S275, and R312 contribute to the acetyl-CoA site. R339 acts as the Proton acceptor in catalysis. Residues R339, E431, and 456 to 459 (GFLD) contribute to the glyoxylate site. Mg(2+) is bound by residues E431 and D459. P540 is a binding site for acetyl-CoA. C616 carries the cysteine sulfenic acid (-SOH) modification. D630 functions as the Proton donor in the catalytic mechanism.

This sequence belongs to the malate synthase family. GlcB subfamily. As to quaternary structure, monomer. Mg(2+) is required as a cofactor.

Its subcellular location is the cytoplasm. It carries out the reaction glyoxylate + acetyl-CoA + H2O = (S)-malate + CoA + H(+). Its pathway is carbohydrate metabolism; glyoxylate cycle; (S)-malate from isocitrate: step 2/2. Involved in the glycolate utilization. Catalyzes the condensation and subsequent hydrolysis of acetyl-coenzyme A (acetyl-CoA) and glyoxylate to form malate and CoA. The polypeptide is Malate synthase G (Halalkalibacterium halodurans (strain ATCC BAA-125 / DSM 18197 / FERM 7344 / JCM 9153 / C-125) (Bacillus halodurans)).